Reading from the N-terminus, the 219-residue chain is Orotate phosphoribosyltransferase (219 aa).

Lysine 26 contacts 5-phospho-alpha-D-ribose 1-diphosphate. 34–35 is a binding site for orotate; the sequence is FF. 5-phospho-alpha-D-ribose 1-diphosphate contacts are provided by residues 72–73, arginine 98, lysine 99, lysine 102, histidine 104, and 124–132; these read YK and DDVITAGTA. Residues threonine 128 and arginine 156 each contribute to the orotate site.

This sequence belongs to the purine/pyrimidine phosphoribosyltransferase family. PyrE subfamily. As to quaternary structure, homodimer. The cofactor is Mg(2+).

The enzyme catalyses orotidine 5'-phosphate + diphosphate = orotate + 5-phospho-alpha-D-ribose 1-diphosphate. The protein operates within pyrimidine metabolism; UMP biosynthesis via de novo pathway; UMP from orotate: step 1/2. Catalyzes the transfer of a ribosyl phosphate group from 5-phosphoribose 1-diphosphate to orotate, leading to the formation of orotidine monophosphate (OMP). The polypeptide is Orotate phosphoribosyltransferase (Stenotrophomonas maltophilia (strain R551-3)).